The following is a 28-amino-acid chain: uncharacterized protein (28 aa).

The protein resides in the cell inner membrane. This is an uncharacterized protein from Escherichia coli (strain K12).